The following is a 388-amino-acid chain: Succinate--CoA ligase [ADP-forming] subunit beta (388 aa).

The ATP-grasp domain occupies 9 to 245 (KELLKSYGLP…KSQENERELK (237 aa)). ATP contacts are provided by residues Lys46, 53 to 55 (GRG), Glu100, Tyr103, and Glu108. Residues Asn200 and Asp214 each contribute to the Mg(2+) site. Residues Asn265 and 322-324 (GIV) each bind substrate.

Belongs to the succinate/malate CoA ligase beta subunit family. As to quaternary structure, heterotetramer of two alpha and two beta subunits. It depends on Mg(2+) as a cofactor.

It carries out the reaction succinate + ATP + CoA = succinyl-CoA + ADP + phosphate. The catalysed reaction is GTP + succinate + CoA = succinyl-CoA + GDP + phosphate. Its pathway is carbohydrate metabolism; tricarboxylic acid cycle; succinate from succinyl-CoA (ligase route): step 1/1. Functionally, succinyl-CoA synthetase functions in the citric acid cycle (TCA), coupling the hydrolysis of succinyl-CoA to the synthesis of either ATP or GTP and thus represents the only step of substrate-level phosphorylation in the TCA. The beta subunit provides nucleotide specificity of the enzyme and binds the substrate succinate, while the binding sites for coenzyme A and phosphate are found in the alpha subunit. The polypeptide is Succinate--CoA ligase [ADP-forming] subunit beta (Psychrobacter cryohalolentis (strain ATCC BAA-1226 / DSM 17306 / VKM B-2378 / K5)).